The following is a 538-amino-acid chain: Syncytin-2 (538 aa).

Positions 1 to 15 are cleaved as a signal peptide; the sequence is MGLLLLVLILTPSLA. Residues 16 to 478 lie on the Extracellular side of the membrane; that stretch reads AYRHPDFPLL…GWLNWEGTWK (463 aa). A CXXC motif is present at residues 43-46; the sequence is CWLC. 3 disulfides stabilise this stretch: C43-C46, C43-C439, and C431-C438. N133, N146, N177, N220, N241, N247, N312, and N332 each carry an N-linked (GlcNAc...) asparagine glycan. The interval 354-374 is fusion peptide; that stretch reads FIPLLAGLGILAGTGTGIAGI. A CKS-17 motif is present at residues 414-430; it reads LQNRRGLDMLTAAQGGI. Residues 431–439 carry the CX6CC motif; the sequence is CLALDEKCC. N-linked (GlcNAc...) asparagine glycosylation is present at N443. Residues 479-499 traverse the membrane as a helical segment; sequence WFSWVLPLTGPLVSLLLLLLF. The Cytoplasmic portion of the chain corresponds to 500-538; sequence GPCLLNLITQFVSSRLQAIKLQTNLSAGRHPRNIQESPF.

Belongs to the gamma type-C retroviral envelope protein family. HERV class-I FRD env subfamily. As to quaternary structure, the surface and transmembrane proteins form a heterodimer. They are attached by non-covalent interactions or by a labile interchain disulfide bond. In terms of processing, specific enzymatic cleavages in vivo yield the mature SU and TM proteins. Post-translationally, the CXXC motif is highly conserved across a broad range of retroviral envelope proteins. It is thought to participate in the formation of a labile disulfide bond possibly with the CX6CC motif present in the transmembrane protein.

It localises to the virion. The protein localises to the cell membrane. In terms of biological role, this endogenous retroviral envelope protein has retained its original fusogenic properties and participates in trophoblast fusion and the formation of a syncytium during placenta morphogenesis. The interaction with MFSD2A is apparently important for this process. Its function is as follows. Endogenous envelope proteins may have kept, lost or modified their original function during evolution but this one can still make pseudotypes with MLV, HIV-1 or SIV-1 virions and confer infectivity. Retroviral envelope proteins mediate receptor recognition and membrane fusion during early infection. The surface protein mediates receptor recognition, while the transmembrane protein anchors the envelope heterodimer to the viral membrane through one transmembrane domain. The other hydrophobic domain, called fusion peptide, mediates fusion of the viral membrane with the target cell membrane. This is Syncytin-2 (ERVFRD-1) from Pan troglodytes (Chimpanzee).